The sequence spans 213 residues: FMN-dependent NADH:quinone oxidoreductase (213 aa).

This sequence belongs to the azoreductase type 1 family. As to quaternary structure, homodimer. It depends on FMN as a cofactor.

The catalysed reaction is 2 a quinone + NADH + H(+) = 2 a 1,4-benzosemiquinone + NAD(+). It carries out the reaction N,N-dimethyl-1,4-phenylenediamine + anthranilate + 2 NAD(+) = 2-(4-dimethylaminophenyl)diazenylbenzoate + 2 NADH + 2 H(+). Its function is as follows. Quinone reductase that provides resistance to thiol-specific stress caused by electrophilic quinones. Functionally, also exhibits azoreductase activity. Catalyzes the reductive cleavage of the azo bond in aromatic azo compounds to the corresponding amines. This is FMN-dependent NADH:quinone oxidoreductase from Streptococcus agalactiae serotype III (strain NEM316).